Reading from the N-terminus, the 58-residue chain is Enterocin-HF (58 aa).

The propeptide occupies 1–15 (MEKLTVKEMSQVVGG). The cysteines at positions 24 and 29 are disulfide-linked.

The protein resides in the secreted. Its function is as follows. Bacteriocin. This Enterococcus faecium (Streptococcus faecium) protein is Enterocin-HF (entHF).